The sequence spans 329 residues: Deoxynucleotidyltransferase terminal-interacting protein 1 (329 aa).

Disordered regions lie at residues 1 to 22 (MGAT…GGLE) and 147 to 178 (KRGR…ILSS). Residues 56-147 (MTTSFTDPAI…RLTHELPGIK (92 aa)) form an important for dimerization region. A compositionally biased stretch (basic and acidic residues) spans 147 to 158 (KRGRQAEEECAH). A DNA-binding region (a.T hook) is located at residues 159–173 (RGSPLPKKRKGRPPG). Position 161 is a phosphoserine (serine 161). The Nuclear localization signal signature appears at 164-170 (PKKRKGR). Positions 197–316 (REGPKWDPAR…MRKYMETLRT (120 aa)) are important for DNA and nucleosome binding. A DNA-binding region (H-T-H motif) is located at residues 216 to 237 (GSRANKALGMGGTRGRIYIKHP).

In terms of assembly, monomer and homodimer. A minor proportion may form homotrimers. Interacts with ZNF541. Interacts with the terminal deoxynucleotidyltransferase DNTT. Interacts with TRERF1. Identified in a histone deacetylase complex that contains DNTTIP1, HDAC1 and MIDEAS; this complex assembles into a tetramer that contains four copies of each protein chain. Component of a histone deacetylase complex containing DNTTIP1, ZNF541, HDAC1 and HDAC2. Identified in a complex with KCTD19, HDAC1, HDAC2 and ZNF541.

The protein resides in the nucleus. Functionally, increases DNTT terminal deoxynucleotidyltransferase activity (in vitro). Also acts as a transcriptional regulator, binding to the consensus sequence 5'-GNTGCATG-3' following an AT-tract. Associates with RAB20 promoter and positively regulates its transcription. Binds DNA and nucleosomes; may recruit HDAC1 complexes to nucleosomes or naked DNA. In Homo sapiens (Human), this protein is Deoxynucleotidyltransferase terminal-interacting protein 1 (DNTTIP1).